Consider the following 427-residue polypeptide: ETS domain-containing protein Elk-1 (427 aa).

Positions 5 to 86 form a DNA-binding region, ETS; the sequence is VTLWQFLLQL…SGQKFVYKFV (82 aa). Disordered regions lie at residues 116-146, 166-202, and 226-252; these read ATVH…GLAR, LQPQ…SPNP, and PNQK…VEGP. Glycyl lysine isopeptide (Lys-Gly) (interchain with G-Cter in SUMO) cross-links involve residues lysine 229, lysine 248, and lysine 253. The segment covering 300 to 310 has biased composition (polar residues); sequence STSTTEITQPQ. Residues 300–350 are disordered; that stretch reads STSTTEITQPQKGRKPRDLELPLSPSLLGGQGPERTPGSGTSSGLQAQGPA. Phosphoserine; by MAPK1 is present on serine 323. 4 positions are modified to phosphothreonine; by MAPK1: threonine 335, threonine 352, threonine 362, and threonine 367. Positions 348–398 are sufficient for interaction with MAD2L2; it reads GPALTPSLLPTHTLTPVLLTPSSLPPSIHFWSTLSPIAPRSPAKLSFQFPS. The O-linked (GlcNAc) threonine glycan is linked to threonine 380. A Phosphoserine; by MAPK1 and MAPK8 modification is found at serine 382. At serine 388 the chain carries Phosphoserine; by MAPK1. Threonine 416 is subject to Phosphothreonine; by MAPK1. Phosphoserine; by MAPK1 is present on serine 421.

The protein belongs to the ETS family. In terms of assembly, interacts in its sumoylated form with PIAS2/PIASX which enhances its transcriptional activator activity. Interacts with MAD2L2; the interaction is direct and promotes phosphorylation by the kinases MAPK8 and/or MAPK9. Interacts with POU1F1. Post-translationally, sumoylation represses transcriptional activator activity as it results in recruitment of HDAC2 to target gene promoters which leads to decreased histone acetylation and reduced transactivator activity. It also regulates nuclear retention. In terms of processing, on mitogenic stimulation, phosphorylated on C-terminal serine and threonine residues by MAPK1. Ser-382 and Ser-388 are the preferred sites for MAPK1. In vitro, phosphorylation by MAPK1 potentiates ternary complex formation with the serum responses factors, SRE and SRF. Also phosphorylated on Ser-382 by MAPK8 and/or MAKP9. Phosphorylation leads to loss of sumoylation and restores transcriptional activator activity. Phosphorylated and activated by CAMK4, MAPK11, MAPK12 and MAPK14. Upon bFGF stimulus, phosphorylated by PAK1. Phosphorylated by PRP4K at Thr-416; phosphorylation activation ELK1 transcriptional activity.

The protein localises to the nucleus. Transcription factor that binds to purine-rich DNA sequences. Forms a ternary complex with SRF and the ETS and SRF motifs of the serum response element (SRE) on the promoter region of immediate early genes such as FOS and IER2. Induces target gene transcription upon JNK and MAPK-signaling pathways stimulation. In Rattus norvegicus (Rat), this protein is ETS domain-containing protein Elk-1.